Consider the following 526-residue polypeptide: Nitrogenase iron-iron protein alpha chain (526 aa).

[8Fe-7S] cluster-binding residues include cysteine 49, cysteine 75, and cysteine 138. Residues cysteine 257 and histidine 423 each coordinate [8Fe-9S-C-homocitryl] cluster. Residues 507–526 form a disordered region; sequence RNQPMPPSRKLRDAVQPAAE.

It belongs to the NifD/NifK/NifE/NifN family. Hexamer of two alpha, two beta, and two delta chains. Requires [8Fe-7S] cluster as cofactor. The cofactor is [8Fe-9S-C-homocitryl] cluster.

The catalysed reaction is N2 + 8 reduced [2Fe-2S]-[ferredoxin] + 16 ATP + 16 H2O = H2 + 8 oxidized [2Fe-2S]-[ferredoxin] + 2 NH4(+) + 16 ADP + 16 phosphate + 6 H(+). This iron-iron protein is part of the nitrogenase complex that catalyzes the key enzymatic reactions in nitrogen fixation. Other nitrogenase complexes utilize a molybdenum-iron protein or a vanadium-iron protein. The chain is Nitrogenase iron-iron protein alpha chain (anfD) from Rhodobacter capsulatus (Rhodopseudomonas capsulata).